Reading from the N-terminus, the 423-residue chain is Serine--tRNA ligase (423 aa).

Residue 229-231 participates in L-serine binding; that stretch reads TAE. 260–262 is a binding site for ATP; it reads RKE. Glu-283 is an L-serine binding site. An ATP-binding site is contributed by 347-350; sequence EISS. Ser-383 is an L-serine binding site.

It belongs to the class-II aminoacyl-tRNA synthetase family. Type-1 seryl-tRNA synthetase subfamily. In terms of assembly, homodimer. The tRNA molecule binds across the dimer.

Its subcellular location is the cytoplasm. The enzyme catalyses tRNA(Ser) + L-serine + ATP = L-seryl-tRNA(Ser) + AMP + diphosphate + H(+). It carries out the reaction tRNA(Sec) + L-serine + ATP = L-seryl-tRNA(Sec) + AMP + diphosphate + H(+). It participates in aminoacyl-tRNA biosynthesis; selenocysteinyl-tRNA(Sec) biosynthesis; L-seryl-tRNA(Sec) from L-serine and tRNA(Sec): step 1/1. Functionally, catalyzes the attachment of serine to tRNA(Ser). Is also able to aminoacylate tRNA(Sec) with serine, to form the misacylated tRNA L-seryl-tRNA(Sec), which will be further converted into selenocysteinyl-tRNA(Sec). In Syntrophotalea carbinolica (strain DSM 2380 / NBRC 103641 / GraBd1) (Pelobacter carbinolicus), this protein is Serine--tRNA ligase.